Consider the following 193-residue polypeptide: Protein GrpE (193 aa).

The tract at residues 1 to 40 (MTEENRPQPDQPELTVTSESSVQETGENKARTPEQEGEAM) is disordered. The segment covering 14–25 (LTVTSESSVQET) has biased composition (polar residues).

This sequence belongs to the GrpE family. As to quaternary structure, homodimer.

It localises to the cytoplasm. Functionally, participates actively in the response to hyperosmotic and heat shock by preventing the aggregation of stress-denatured proteins, in association with DnaK and GrpE. It is the nucleotide exchange factor for DnaK and may function as a thermosensor. Unfolded proteins bind initially to DnaJ; upon interaction with the DnaJ-bound protein, DnaK hydrolyzes its bound ATP, resulting in the formation of a stable complex. GrpE releases ADP from DnaK; ATP binding to DnaK triggers the release of the substrate protein, thus completing the reaction cycle. Several rounds of ATP-dependent interactions between DnaJ, DnaK and GrpE are required for fully efficient folding. This is Protein GrpE from Nitrosospira multiformis (strain ATCC 25196 / NCIMB 11849 / C 71).